The primary structure comprises 196 residues: Imidazoleglycerol-phosphate dehydratase (196 aa).

It belongs to the imidazoleglycerol-phosphate dehydratase family.

The protein localises to the cytoplasm. It catalyses the reaction D-erythro-1-(imidazol-4-yl)glycerol 3-phosphate = 3-(imidazol-4-yl)-2-oxopropyl phosphate + H2O. Its pathway is amino-acid biosynthesis; L-histidine biosynthesis; L-histidine from 5-phospho-alpha-D-ribose 1-diphosphate: step 6/9. The sequence is that of Imidazoleglycerol-phosphate dehydratase from Clostridium botulinum (strain 657 / Type Ba4).